A 90-amino-acid polypeptide reads, in one-letter code: Probable Fe(2+)-trafficking protein (90 aa).

Belongs to the Fe(2+)-trafficking protein family.

Its function is as follows. Could be a mediator in iron transactions between iron acquisition and iron-requiring processes, such as synthesis and/or repair of Fe-S clusters in biosynthetic enzymes. This is Probable Fe(2+)-trafficking protein from Coxiella burnetii (strain CbuK_Q154) (Coxiella burnetii (strain Q154)).